A 577-amino-acid chain; its full sequence is MNIQALLSEKVSQAMIAAGAPADCEPQVRQSAKVQFGDYQANGMMAVAKKLGMAPRQLAEQVLTHLDLSGIASKVEIAGPGFINIFLEPAFLAEQVQQALASDRLGVSQPTRQTIVVDYSAPNVAKEMHVGHLRSTIIGDAAVRTLEFLGHHVIRANHVGDWGTQFGMLIAWLEKQQQENAGDMALADLEGFYRDAKKHYDEDEAFAERARNYVVKLQSGDTYFREMWRKLVDITMTQNQITYDRLNVTLTRDDVMGESLYNPMLPGIVADLKAKGLAVESEGATVVFLDEFKNKEGDPMGVIIQKKDGGYLYTTTDIACAKYRYETLHADRVLYYIDSRQHQHLMQAWTIVRKAGYVPDSVPLEHHMFGMMLGKDGKPFKTRAGGTVKLADLLDEALERARRLVAEKNPDMPADELEKLANAVGIGAVKYADLSKNRTTDYIFDWDNMLAFEGNTAPYMQYAYTRVLSVFRKADIDEQALASAPVIISEDREAQLAARLLQFEETLTVVAREGTPHVMCAYLYDVAGLFSGFYEHCPILSAENDAVRNSRLKLAQLTAKTLKLGLDTLGIETVERM.

Positions Pro122–His132 match the 'HIGH' region motif.

The protein belongs to the class-I aminoacyl-tRNA synthetase family. Monomer.

It is found in the cytoplasm. The catalysed reaction is tRNA(Arg) + L-arginine + ATP = L-arginyl-tRNA(Arg) + AMP + diphosphate. This chain is Arginine--tRNA ligase, found in Salmonella newport (strain SL254).